A 104-amino-acid polypeptide reads, in one-letter code: Gastrin (104 aa).

An N-terminal signal peptide occupies residues 1–21; that stretch reads MQRLCVYVLILALALATFSEA. Residues 22–58 constitute a propeptide that is removed on maturation; sequence SWKPRSRLQDAPSGPGANRGLEPHGLDQLGPASHHRR. A disordered region spans residues 22 to 70; sequence SWKPRSRLQDAPSGPGANRGLEPHGLDQLGPASHHRRQLGLQGPPQLVA. 2 positions are modified to pyrrolidone carboxylic acid: glutamine 59 and glutamine 76. The residue at position 87 (tyrosine 87) is a Sulfotyrosine. A Phenylalanine amide modification is found at phenylalanine 92. Serine 96 is subject to Phosphoserine. Residues 96–104 constitute a propeptide that is removed on maturation; the sequence is SAEEGDQRP.

Belongs to the gastrin/cholecystokinin family.

Its subcellular location is the secreted. Gastrin stimulates the stomach mucosa to produce and secrete hydrochloric acid and the pancreas to secrete its digestive enzymes. It also stimulates smooth muscle contraction and increases blood circulation and water secretion in the stomach and intestine. In Canis lupus familiaris (Dog), this protein is Gastrin (GAST).